Here is a 141-residue protein sequence, read N- to C-terminus: Nucleoside diphosphate kinase (141 aa).

ATP contacts are provided by lysine 11, phenylalanine 59, arginine 87, threonine 93, arginine 104, and asparagine 114. Histidine 117 functions as the Pros-phosphohistidine intermediate in the catalytic mechanism.

It belongs to the NDK family. Homotetramer. The cofactor is Mg(2+).

The protein localises to the cytoplasm. It carries out the reaction a 2'-deoxyribonucleoside 5'-diphosphate + ATP = a 2'-deoxyribonucleoside 5'-triphosphate + ADP. The enzyme catalyses a ribonucleoside 5'-diphosphate + ATP = a ribonucleoside 5'-triphosphate + ADP. Its function is as follows. Major role in the synthesis of nucleoside triphosphates other than ATP. The ATP gamma phosphate is transferred to the NDP beta phosphate via a ping-pong mechanism, using a phosphorylated active-site intermediate. In Pseudomonas putida (strain GB-1), this protein is Nucleoside diphosphate kinase.